The following is a 331-amino-acid chain: Putative peptidyl-prolyl cis-trans isomerase RC0542 (331 aa).

Positions 33–54 (EQTASNNSSTDENQTSINNEPP) are disordered. In terms of domain architecture, PPIase FKBP-type spans 128–226 (GHVVTVFYQI…SNEVKIYDDE (99 aa)).

It carries out the reaction [protein]-peptidylproline (omega=180) = [protein]-peptidylproline (omega=0). The polypeptide is Putative peptidyl-prolyl cis-trans isomerase RC0542 (Rickettsia conorii (strain ATCC VR-613 / Malish 7)).